The sequence spans 413 residues: N5-carboxyaminoimidazole ribonucleotide synthase (413 aa).

The disordered stretch occupies residues 1–21 (MKRVSEQAGNPDGNPQAHVPG). Residues Lys-122, Lys-162, 199-202 (EEKV), Glu-207, and 289-290 (NE) each bind ATP. Residues 126–319 (RERLAELGAP…QFEQHLRAVM (194 aa)) enclose the ATP-grasp domain.

This sequence belongs to the PurK/PurT family. Homodimer.

The enzyme catalyses 5-amino-1-(5-phospho-beta-D-ribosyl)imidazole + hydrogencarbonate + ATP = 5-carboxyamino-1-(5-phospho-D-ribosyl)imidazole + ADP + phosphate + 2 H(+). The protein operates within purine metabolism; IMP biosynthesis via de novo pathway; 5-amino-1-(5-phospho-D-ribosyl)imidazole-4-carboxylate from 5-amino-1-(5-phospho-D-ribosyl)imidazole (N5-CAIR route): step 1/2. Catalyzes the ATP-dependent conversion of 5-aminoimidazole ribonucleotide (AIR) and HCO(3)(-) to N5-carboxyaminoimidazole ribonucleotide (N5-CAIR). The protein is N5-carboxyaminoimidazole ribonucleotide synthase of Corynebacterium ammoniagenes (Brevibacterium ammoniagenes).